The primary structure comprises 407 residues: Imidazolonepropionase (407 aa).

The Fe(3+) site is built by histidine 68 and histidine 70. Zn(2+) is bound by residues histidine 68 and histidine 70. 4-imidazolone-5-propanoate-binding residues include arginine 77, tyrosine 140, and histidine 173. Tyrosine 140 is a binding site for N-formimidoyl-L-glutamate. Fe(3+) is bound at residue histidine 236. Histidine 236 serves as a coordination point for Zn(2+). Glutamine 239 is a binding site for 4-imidazolone-5-propanoate. Aspartate 311 lines the Fe(3+) pocket. Aspartate 311 provides a ligand contact to Zn(2+). Residues asparagine 313 and glycine 315 each contribute to the N-formimidoyl-L-glutamate site. Residue threonine 316 coordinates 4-imidazolone-5-propanoate.

It belongs to the metallo-dependent hydrolases superfamily. HutI family. Zn(2+) is required as a cofactor. Requires Fe(3+) as cofactor.

It localises to the cytoplasm. It carries out the reaction 4-imidazolone-5-propanoate + H2O = N-formimidoyl-L-glutamate. It participates in amino-acid degradation; L-histidine degradation into L-glutamate; N-formimidoyl-L-glutamate from L-histidine: step 3/3. Catalyzes the hydrolytic cleavage of the carbon-nitrogen bond in imidazolone-5-propanoate to yield N-formimidoyl-L-glutamate. It is the third step in the universal histidine degradation pathway. This chain is Imidazolonepropionase, found in Stenotrophomonas maltophilia (strain R551-3).